A 39-amino-acid polypeptide reads, in one-letter code: ORF8a protein (39 aa).

The N-terminal stretch at methionine 1 to cysteine 15 is a signal peptide. In terms of domain architecture, SARS ORF8 Ig-like spans isoleucine 16–histidine 39.

This Homo sapiens (Human) protein is ORF8a protein.